The chain runs to 225 residues: Biosynthetic peptidoglycan transglycosylase (225 aa).

A helical membrane pass occupies residues 9 to 29 (LLIFIGAILLIQLWIFSSLVW).

The protein belongs to the glycosyltransferase 51 family.

The protein resides in the cell inner membrane. The catalysed reaction is [GlcNAc-(1-&gt;4)-Mur2Ac(oyl-L-Ala-gamma-D-Glu-L-Lys-D-Ala-D-Ala)](n)-di-trans,octa-cis-undecaprenyl diphosphate + beta-D-GlcNAc-(1-&gt;4)-Mur2Ac(oyl-L-Ala-gamma-D-Glu-L-Lys-D-Ala-D-Ala)-di-trans,octa-cis-undecaprenyl diphosphate = [GlcNAc-(1-&gt;4)-Mur2Ac(oyl-L-Ala-gamma-D-Glu-L-Lys-D-Ala-D-Ala)](n+1)-di-trans,octa-cis-undecaprenyl diphosphate + di-trans,octa-cis-undecaprenyl diphosphate + H(+). The protein operates within cell wall biogenesis; peptidoglycan biosynthesis. In terms of biological role, peptidoglycan polymerase that catalyzes glycan chain elongation from lipid-linked precursors. This chain is Biosynthetic peptidoglycan transglycosylase, found in Acinetobacter baumannii (strain SDF).